Here is a 145-residue protein sequence, read N- to C-terminus: 3-hydroxyacyl-[acyl-carrier-protein] dehydratase FabZ (145 aa).

Histidine 52 is an active-site residue.

Belongs to the thioester dehydratase family. FabZ subfamily.

The protein localises to the cytoplasm. It catalyses the reaction a (3R)-hydroxyacyl-[ACP] = a (2E)-enoyl-[ACP] + H2O. In terms of biological role, involved in unsaturated fatty acids biosynthesis. Catalyzes the dehydration of short chain beta-hydroxyacyl-ACPs and long chain saturated and unsaturated beta-hydroxyacyl-ACPs. The polypeptide is 3-hydroxyacyl-[acyl-carrier-protein] dehydratase FabZ (Deinococcus radiodurans (strain ATCC 13939 / DSM 20539 / JCM 16871 / CCUG 27074 / LMG 4051 / NBRC 15346 / NCIMB 9279 / VKM B-1422 / R1)).